The primary structure comprises 221 residues: uncharacterized protein (221 aa).

A DNA-binding region (H-T-H motif) is located at residues 77–96 (YRERAVELGVPERAILVEPN).

It to E.coli YdcF.

Its function is as follows. The imp locus inhibits the extrachromosomal maintenance of the streptomyces plasmid SLP1. May function as a transcriptional activator. This is an uncharacterized protein from Streptomyces coelicolor (strain ATCC BAA-471 / A3(2) / M145).